A 336-amino-acid chain; its full sequence is Thiamine thiazole synthase (336 aa).

Substrate contacts are provided by residues Ala-89, 110-111 (ES), Gly-118, and Cys-183. The residue at position 219 (Cys-219) is a 2,3-didehydroalanine (Cys). Residues Asp-221, His-236, Met-288, and 298–300 (RMG) contribute to the substrate site.

The protein belongs to the THI4 family. In terms of assembly, homooctamer. It depends on Fe cation as a cofactor. During the catalytic reaction, a sulfide is transferred from Cys-219 to a reaction intermediate, generating a dehydroalanine residue.

It is found in the cytoplasm. The protein localises to the nucleus. It catalyses the reaction [ADP-thiazole synthase]-L-cysteine + glycine + NAD(+) = [ADP-thiazole synthase]-dehydroalanine + ADP-5-ethyl-4-methylthiazole-2-carboxylate + nicotinamide + 3 H2O + 2 H(+). In terms of biological role, involved in biosynthesis of the thiamine precursor thiazole. Catalyzes the conversion of NAD and glycine to adenosine diphosphate 5-(2-hydroxyethyl)-4-methylthiazole-2-carboxylic acid (ADT), an adenylated thiazole intermediate. The reaction includes an iron-dependent sulfide transfer from a conserved cysteine residue of the protein to a thiazole intermediate. The enzyme can only undergo a single turnover, which suggests it is a suicide enzyme. May have additional roles in adaptation to various stress conditions and in DNA damage tolerance. This chain is Thiamine thiazole synthase, found in Puccinia graminis f. sp. tritici (strain CRL 75-36-700-3 / race SCCL) (Black stem rust fungus).